A 461-amino-acid polypeptide reads, in one-letter code: Zinc transporter 6 (461 aa).

Residues 1-33 (MGTIHLFRKPQRSFFGKLLQEFRLVAADRRSWK) lie on the Cytoplasmic side of the membrane. A helical membrane pass occupies residues 34-54 (ILLFGAINLTCTGFLLMWCSS). Residues 55-64 (TNSIALTAYT) lie on the Extracellular side of the membrane. Residues 65–85 (YLTIFDLFSLITCLVSYWVMM) form a helical membrane-spanning segment. At 86–98 (RKPSPAYSFGFER) the chain is on the cytoplasmic side. The helical transmembrane segment at 99–119 (LEVLAVFASTVLAQLGALFIL) threads the bilayer. Over 120 to 134 (KESAERFLEQPEIHT) the chain is Extracellular. Residues 135–155 (GRLLVGTFVALSFNLFTMLSI) traverse the membrane as a helical segment. The Cytoplasmic portion of the chain corresponds to 156-200 (RNKPFAYVSEAASTSWLQEHVADLSRSLCGIIPGLSSIFLPRMNP). Residues 201 to 221 (FVLIDLAGAFALCITYMLIEI) traverse the membrane as a helical segment. Topologically, residues 222 to 223 (NN) are extracellular. The chain crosses the membrane as a helical span at residues 224-244 (YFAVDTASAIAIALMTFGTMY). Over 245 to 461 (PMSVYSGKVL…TNNRIGQPRP (217 aa)) the chain is Cytoplasmic. The disordered stretch occupies residues 362 to 393 (PPLKGTDDSNPVTSTPTKPSSPPPEFSFNTPG). Over residues 370 to 379 (SNPVTSTPTK) the composition is skewed to low complexity.

This sequence belongs to the cation diffusion facilitator (CDF) transporter (TC 2.A.4) family. SLC30A subfamily. Heterodimer with SLC30A5; form a functional zinc ion transmembrane transporter.

Its subcellular location is the golgi apparatus. It localises to the trans-Golgi network membrane. Has probably no intrinsic transporter activity but together with SLC30A5 forms a functional zinc ion:proton antiporter heterodimer, mediating zinc entry into the lumen of organelles along the secretory pathway. As part of that zinc ion:proton antiporter, contributes to zinc ion homeostasis within the early secretory pathway and regulates the activation and folding of enzymes like alkaline phosphatases and enzymes involved in phosphatidylinositol glycan anchor biosynthesis. This Bos taurus (Bovine) protein is Zinc transporter 6 (SLC30A6).